The primary structure comprises 407 residues: Carbamoyl phosphate synthase small chain (407 aa).

Residues methionine 1 to threonine 205 are CPSase. Serine 60, glycine 257, and glycine 259 together coordinate L-glutamine. The Glutamine amidotransferase type-1 domain occupies histidine 209–glutamate 397. Cysteine 286 acts as the Nucleophile in catalysis. The L-glutamine site is built by leucine 287, glutamine 290, asparagine 328, glycine 330, and phenylalanine 331. Catalysis depends on residues histidine 370 and glutamate 372.

Belongs to the CarA family. As to quaternary structure, composed of two chains; the small (or glutamine) chain promotes the hydrolysis of glutamine to ammonia, which is used by the large (or ammonia) chain to synthesize carbamoyl phosphate. Tetramer of heterodimers (alpha,beta)4.

The enzyme catalyses hydrogencarbonate + L-glutamine + 2 ATP + H2O = carbamoyl phosphate + L-glutamate + 2 ADP + phosphate + 2 H(+). The catalysed reaction is L-glutamine + H2O = L-glutamate + NH4(+). The protein operates within amino-acid biosynthesis; L-arginine biosynthesis; carbamoyl phosphate from bicarbonate: step 1/1. It participates in pyrimidine metabolism; UMP biosynthesis via de novo pathway; (S)-dihydroorotate from bicarbonate: step 1/3. Functionally, small subunit of the glutamine-dependent carbamoyl phosphate synthetase (CPSase). CPSase catalyzes the formation of carbamoyl phosphate from the ammonia moiety of glutamine, carbonate, and phosphate donated by ATP, constituting the first step of 2 biosynthetic pathways, one leading to arginine and/or urea and the other to pyrimidine nucleotides. The small subunit (glutamine amidotransferase) binds and cleaves glutamine to supply the large subunit with the substrate ammonia. The polypeptide is Carbamoyl phosphate synthase small chain (Brucella anthropi (strain ATCC 49188 / DSM 6882 / CCUG 24695 / JCM 21032 / LMG 3331 / NBRC 15819 / NCTC 12168 / Alc 37) (Ochrobactrum anthropi)).